Here is a 257-residue protein sequence, read N- to C-terminus: Imidazole glycerol phosphate synthase subunit HisF (257 aa).

Residues Asp11 and Asp130 contribute to the active site.

The protein belongs to the HisA/HisF family. In terms of assembly, heterodimer of HisH and HisF.

Its subcellular location is the cytoplasm. It catalyses the reaction 5-[(5-phospho-1-deoxy-D-ribulos-1-ylimino)methylamino]-1-(5-phospho-beta-D-ribosyl)imidazole-4-carboxamide + L-glutamine = D-erythro-1-(imidazol-4-yl)glycerol 3-phosphate + 5-amino-1-(5-phospho-beta-D-ribosyl)imidazole-4-carboxamide + L-glutamate + H(+). It functions in the pathway amino-acid biosynthesis; L-histidine biosynthesis; L-histidine from 5-phospho-alpha-D-ribose 1-diphosphate: step 5/9. IGPS catalyzes the conversion of PRFAR and glutamine to IGP, AICAR and glutamate. The HisF subunit catalyzes the cyclization activity that produces IGP and AICAR from PRFAR using the ammonia provided by the HisH subunit. In Photobacterium profundum (strain SS9), this protein is Imidazole glycerol phosphate synthase subunit HisF.